The chain runs to 37 residues: Large ribosomal subunit protein bL36c (37 aa).

Belongs to the bacterial ribosomal protein bL36 family.

It is found in the plastid. The protein localises to the chloroplast. The protein is Large ribosomal subunit protein bL36c (rpl36) of Anthoceros angustus (Hornwort).